We begin with the raw amino-acid sequence, 295 residues long: GDP-polyphosphate phosphotransferase (295 aa).

The segment at 1-28 (MDIPSVDVSTATNDGASSRAKGHRSAAP) is disordered. Polar residues predominate over residues 7–16 (DVSTATNDGA). Residues histidine 115 and histidine 247 each carry the phosphohistidine modification.

Belongs to the polyphosphate kinase 2 (PPK2) family. Class I subfamily. Interacts with Ndk. Post-translationally, autophosphorylated at His-115 and His-247 using polyP as a phosphate donor.

It carries out the reaction [phosphate](n) + GTP = [phosphate](n+1) + GDP. Its function is as follows. Uses inorganic polyphosphate (polyP) as a donor to convert GDP to GTP. In addition, modulates nucleotide triphosphate synthesis catalyzed by the nucleoside diphosphate kinase (Ndk) in favor of GTP production over CTP or UTP. Plays an important role in survival of M.tuberculosis in macrophages. In Mycobacterium tuberculosis (strain ATCC 25618 / H37Rv), this protein is GDP-polyphosphate phosphotransferase.